Reading from the N-terminus, the 149-residue chain is Deoxyuridine 5'-triphosphate nucleotidohydrolase (149 aa).

Substrate contacts are provided by residues Arg68–Gly70, Asn81, Leu85–Asp87, and Met95.

This sequence belongs to the dUTPase family. Mg(2+) serves as cofactor.

It carries out the reaction dUTP + H2O = dUMP + diphosphate + H(+). It functions in the pathway pyrimidine metabolism; dUMP biosynthesis; dUMP from dCTP (dUTP route): step 2/2. Functionally, this enzyme is involved in nucleotide metabolism: it produces dUMP, the immediate precursor of thymidine nucleotides and it decreases the intracellular concentration of dUTP so that uracil cannot be incorporated into DNA. The polypeptide is Deoxyuridine 5'-triphosphate nucleotidohydrolase (Methylibium petroleiphilum (strain ATCC BAA-1232 / LMG 22953 / PM1)).